The chain runs to 169 residues: Eukaryotic translation initiation factor 5A-2 (169 aa).

Lys-64 carries the post-translational modification Hypusine.

The protein belongs to the eIF-5A family. In terms of processing, lys-51 undergoes hypusination, a unique post-translational modification that consists in the addition of a butylamino group from spermidine to lysine side chain, leading to the formation of the unusual amino acid hypusine. eIF-5As are the only known proteins to undergo this modification, which is essential for their function.

The protein localises to the cytoplasm. It localises to the nucleus. In terms of biological role, translation factor that promotes translation elongation and termination, particularly upon ribosome stalling at specific amino acid sequence contexts. Binds between the exit (E) and peptidyl (P) site of the ribosome and promotes rescue of stalled ribosome: specifically required for efficient translation of polyproline-containing peptides as well as other motifs that stall the ribosome. Acts as a ribosome quality control (RQC) cofactor by joining the RQC complex to facilitate peptidyl transfer during CAT tailing step. This is Eukaryotic translation initiation factor 5A-2 (tif51b) from Schizosaccharomyces pombe (strain 972 / ATCC 24843) (Fission yeast).